The primary structure comprises 1749 residues: Intraflagellar transport protein 172 homolog (1749 aa).

An N-acetylmethionine modification is found at methionine 1. Lysine 4 is covalently cross-linked (Glycyl lysine isopeptide (Lys-Gly) (interchain with G-Cter in SUMO1)). WD repeat units follow at residues 14–53, 64–103, 110–148, 150–191, 195–233, 238–278, 284–323, 483–520, and 521–559; these read DGAAKVTCMAWSQNNAKFAVCTVDRVVLLYDEHGERRDKF, RKSYMVKGMAFSPDSTKIAIGQTDNIIYVYKIGEDWGDKK, IQTSAVTCLQWPAEYIIVFGLAEGKVRLANTKTNKSSTI, GTES…ESQG, NHPCPPYALAWATNSIVAAGCDRKIVAYGKEGHMLQTFD, PQER…WEEA, TNLYTITALAWKRDGSRLCVGTLCGGVEQFDCCLRRSIYK, SHESRVDWLELNETGHKLLFRDRKLRLHLYDIESCSKT, and MILNFCSYMQWVPGSDVLVAQNRNSLCVWYNIEAPERVT. Residues 593 to 624 form a TPR 1 repeat; the sequence is DEGLIEFGTAIDDGNYIRATAFLETLEMTPET. Arginine 672 bears the Omega-N-methylarginine mark. TPR repeat units follow at residues 692 to 725, 809 to 842, 854 to 887, 912 to 945, 947 to 970, 971 to 1004, 1042 to 1075, 1142 to 1175, 1276 to 1309, 1345 to 1378, 1411 to 1445, 1447 to 1477, and 1574 to 1607; these read EKNYKLAEMIFLEQNAVEEAMGMYQELHRWDECI, GELYERAGDLFEKIHNPQKALECYRKGNAFMKAV, VKLEEAWGDHLVQQKQLDAAINHYIEARCSIKAI, SKYYPLVAQHYASLQEYEIAEELYTKGDRTKDAI, MYTQAGRWEQAHKLAMKCMRPEDV, SVLYITQAQEMEKQGKYREAERLYVTVQEPDLAI, EGRLQEAEYHYLEAQEWKATVNMYRASGLWEEAY, PEVHLKYAMFLEDEGKFEEAEAEFIRAGKPKEAV, VEGFVEQARHWEQAGEYSRAVDCYLKVRDSGNSG, IGKHSAAAELYLNLDLVKEAIDAFIEGEEWNKAK, GVDVIAALDLYVEQGQWDKCIETATKQNYKILHKY, ALYATHLIREGSSAQALALYVQHGAPANPQN, and DKAFYEAGIAAKAVGWDNMAFIFLNRFLDLTDAI.

Belongs to the IFT172 family. In terms of assembly, interacts with IFT88. Interacts with IFT57. Interacts with RABL2/RABL2A; binds preferentially to GDP-bound RABL2.

The protein resides in the cell projection. Its subcellular location is the cilium. Functionally, required for the maintenance and formation of cilia. Plays an indirect role in hedgehog (Hh) signaling, cilia being required for all activity of the hedgehog pathway. The protein is Intraflagellar transport protein 172 homolog (IFT172) of Homo sapiens (Human).